We begin with the raw amino-acid sequence, 154 residues long: 17 kDa surface antigen (154 aa).

Positions 1–19 (MKLLSKIMIIALAASMLQA) are cleaved as a signal peptide. A lipid anchor (N-palmitoyl cysteine) is attached at Cys20. A lipid anchor (S-diacylglycerol cysteine) is attached at Cys20.

The protein belongs to the rickettsiale 17 kDa surface antigen family.

It localises to the cell outer membrane. This is 17 kDa surface antigen (omp) from Rickettsia australis.